Here is a 174-residue protein sequence, read N- to C-terminus: Ribosome maturation factor RimM (174 aa).

A PRC barrel domain is found at 99–172 (ADEFFYHDVI…RLVIRPIAGL (74 aa)).

It belongs to the RimM family. In terms of assembly, binds ribosomal protein uS19.

It is found in the cytoplasm. Its function is as follows. An accessory protein needed during the final step in the assembly of 30S ribosomal subunit, possibly for assembly of the head region. Essential for efficient processing of 16S rRNA. May be needed both before and after RbfA during the maturation of 16S rRNA. It has affinity for free ribosomal 30S subunits but not for 70S ribosomes. The protein is Ribosome maturation factor RimM of Chloroflexus aurantiacus (strain ATCC 29366 / DSM 635 / J-10-fl).